Here is a 174-residue protein sequence, read N- to C-terminus: Crossover junction endodeoxyribonuclease RuvC (174 aa).

Residues Asp-8, Glu-67, and Asp-139 contribute to the active site. The Mg(2+) site is built by Asp-8, Glu-67, and Asp-139.

The protein belongs to the RuvC family. In terms of assembly, homodimer which binds Holliday junction (HJ) DNA. The HJ becomes 2-fold symmetrical on binding to RuvC with unstacked arms; it has a different conformation from HJ DNA in complex with RuvA. In the full resolvosome a probable DNA-RuvA(4)-RuvB(12)-RuvC(2) complex forms which resolves the HJ. The cofactor is Mg(2+).

Its subcellular location is the cytoplasm. The enzyme catalyses Endonucleolytic cleavage at a junction such as a reciprocal single-stranded crossover between two homologous DNA duplexes (Holliday junction).. Functionally, the RuvA-RuvB-RuvC complex processes Holliday junction (HJ) DNA during genetic recombination and DNA repair. Endonuclease that resolves HJ intermediates. Cleaves cruciform DNA by making single-stranded nicks across the HJ at symmetrical positions within the homologous arms, yielding a 5'-phosphate and a 3'-hydroxyl group; requires a central core of homology in the junction. The consensus cleavage sequence is 5'-(A/T)TT(C/G)-3'. Cleavage occurs on the 3'-side of the TT dinucleotide at the point of strand exchange. HJ branch migration catalyzed by RuvA-RuvB allows RuvC to scan DNA until it finds its consensus sequence, where it cleaves and resolves the cruciform DNA. The protein is Crossover junction endodeoxyribonuclease RuvC of Pseudomonas fluorescens (strain ATCC BAA-477 / NRRL B-23932 / Pf-5).